The chain runs to 699 residues: Macoilin-2 (699 aa).

4 helical membrane-spanning segments follow: residues 28-48 (TFLY…DFVL), 75-95 (AFSV…LLFI), 120-140 (VCLP…AIRF), and 154-174 (FAAH…KSYV). Disordered regions lie at residues 219-289 (AAAA…SILP), 322-411 (LLKD…PNNQ), 432-451 (LQAS…SLGT), and 679-699 (FMDT…PLKK). Residues N241, N267, N345, and N365 are each glycosylated (N-linked (GlcNAc...) asparagine). Positions 257-271 (LEYREKERGKNESKK) are enriched in basic and acidic residues. Positions 329 to 346 (SSSSSSTSSNSNKNYKNA) are enriched in low complexity. The span at 366-382 (GSVPSSSGPSSSASSSS) shows a compositional bias: low complexity. N690 is a glycosylation site (N-linked (GlcNAc...) asparagine).

Belongs to the macoilin family.

Its subcellular location is the nucleus membrane. The protein resides in the cell projection. It is found in the axon. The protein localises to the rough endoplasmic reticulum membrane. May play a role in the regulation of neuronal activity. In Danio rerio (Zebrafish), this protein is Macoilin-2.